A 429-amino-acid polypeptide reads, in one-letter code: Acetyltransferase pyr8 (429 aa).

9 helical membrane-spanning segments follow: residues 12 to 32 (IAQE…VIIT), 39 to 56 (LRLA…RFSL), 69 to 89 (GVAA…LLIT), 154 to 174 (YVLR…LIHM), 221 to 241 (VCLN…RISA), 300 to 320 (IFFT…ILGI), 324 to 344 (GSGA…EDGV), 365 to 385 (LVGF…YLYP), and 409 to 429 (VAQK…GGEI).

It belongs to the wax synthase family.

The protein resides in the membrane. It functions in the pathway secondary metabolite biosynthesis; terpenoid biosynthesis. In terms of biological role, acetyltransferase; part of the gene cluster that mediates the biosynthesis of pyripyropene A, a specific human acyl-coenzyme A:cholesterol acyltransferase 2 inhibitor. The first step of the pathway is the synthesis of nicotinyl-CoA from nicotinic acid by the nicotinic acid-CoA ligase pyr1. Nicotinyl-CoA is then a substrate of polyketide synthase pyr2 to produce 4-hydroxy-6-(3-pyridinyl)-2H-pyran-2-one (HPPO) which is further prenylated by the polyprenyl transferase pyr6 to yield farnesyl-HPPO. The next steps consist of an epoxidation of farnesyl-HPPO to epoxyfarnesyl-HPPO by FAD-dependent monooxygenase pyr5 and a cyclization of the terpenoid portion by the terpene cyclase pyr4 to yield deacetyl-pyripyropene E. The 2 cytochrome P450 monooxygenases pyr3 and pyr9, and the 2 acetyltransferases pyr7 and pyr8 are involved in the conversion of deacetyl-pyripyropene E into pyripyropene A through several cycles of oxidation and acetylation steps. Pyr7 acetylates deacetyl-pyripyropene E to pyripyropene E which is oxidized to 11-deacetyl-pyripyropene O by pyr3, which is in turn acetylated into pyripyropene O by pyr8. Pyripyropene O is then oxidized to deacetyl-pyripyropene A by pyr9. Deacetyl-pyripyropene A is finally acetylated to pyripyropene A by pyr8. This is Acetyltransferase pyr8 from Aspergillus fumigatus (strain ATCC MYA-4609 / CBS 101355 / FGSC A1100 / Af293) (Neosartorya fumigata).